A 210-amino-acid chain; its full sequence is Shikimate kinase (210 aa).

Residue 34–39 participates in ATP binding; sequence GAGKSV. S38 is a Mg(2+) binding site. D56, R80, and G102 together coordinate substrate. Residue R140 participates in ATP binding. Residue R159 coordinates substrate.

Belongs to the shikimate kinase family. Monomer. It depends on Mg(2+) as a cofactor.

The protein localises to the cytoplasm. The catalysed reaction is shikimate + ATP = 3-phosphoshikimate + ADP + H(+). It functions in the pathway metabolic intermediate biosynthesis; chorismate biosynthesis; chorismate from D-erythrose 4-phosphate and phosphoenolpyruvate: step 5/7. Catalyzes the specific phosphorylation of the 3-hydroxyl group of shikimic acid using ATP as a cosubstrate. This Bartonella quintana (strain Toulouse) (Rochalimaea quintana) protein is Shikimate kinase.